The primary structure comprises 369 residues: Chaperone protein DnaJ (369 aa).

The region spanning 7 to 73 (DYYEILGVPR…QKRAMYDRFG (67 aa)) is the J domain. The CR-type zinc finger occupies 143–225 (GAEIPVEYER…CGGSGRVLRK (83 aa)). Zn(2+) is bound by residues cysteine 156, cysteine 159, cysteine 173, cysteine 176, cysteine 199, cysteine 202, cysteine 213, and cysteine 216. CXXCXGXG motif repeat units follow at residues 156 to 163 (CPRCGGTG), 173 to 180 (CPSCGGTG), 199 to 206 (CERCGGTG), and 213 to 220 (CHECGGSG).

It belongs to the DnaJ family. As to quaternary structure, homodimer. The cofactor is Zn(2+).

The protein localises to the cytoplasm. Its function is as follows. Participates actively in the response to hyperosmotic and heat shock by preventing the aggregation of stress-denatured proteins and by disaggregating proteins, also in an autonomous, DnaK-independent fashion. Unfolded proteins bind initially to DnaJ; upon interaction with the DnaJ-bound protein, DnaK hydrolyzes its bound ATP, resulting in the formation of a stable complex. GrpE releases ADP from DnaK; ATP binding to DnaK triggers the release of the substrate protein, thus completing the reaction cycle. Several rounds of ATP-dependent interactions between DnaJ, DnaK and GrpE are required for fully efficient folding. Also involved, together with DnaK and GrpE, in the DNA replication of plasmids through activation of initiation proteins. The polypeptide is Chaperone protein DnaJ (Thermotoga sp. (strain RQ2)).